The following is a 391-amino-acid chain: Phosphoglycerate kinase (391 aa).

Residues 21–23 (DLN), R36, 59–62 (HLGR), R113, and R146 contribute to the substrate site. Residues K197, E319, and 345 to 348 (GGDT) contribute to the ATP site.

The protein belongs to the phosphoglycerate kinase family. As to quaternary structure, monomer.

It localises to the cytoplasm. It catalyses the reaction (2R)-3-phosphoglycerate + ATP = (2R)-3-phospho-glyceroyl phosphate + ADP. It functions in the pathway carbohydrate degradation; glycolysis; pyruvate from D-glyceraldehyde 3-phosphate: step 2/5. This is Phosphoglycerate kinase from Xanthomonas oryzae pv. oryzae (strain MAFF 311018).